A 446-amino-acid polypeptide reads, in one-letter code: Transcription factor Dp-2 (446 aa).

T2 carries the post-translational modification N-acetylthreonine. Phosphoserine; by CDK2 occurs at positions 24 and 42. Residues 60–82 (PQMIISTPQRIANSGSVLIGNPY) form an interaction with CEBPA region. The Nuclear localization signal motif lies at 103 to 118 (SDRKRAREFIDSDFSE). S122 bears the Phosphoserine mark. Residues 129 to 210 (GKGLRHFSMK…PTGKKRNQVD (82 aa)) mediate DNA binding. A DEF box motif is present at residues 176–210 (DQENIRRRVYDALNVLMAMNIISSLPTGKKRNQVD). The interval 219-292 (NLEIEKQRRI…RKTVIDCSIS (74 aa)) is dimerization. The tract at residues 229 to 261 (ERIKQKRAQLQELLLQQIAFKNLVQRNRQNEQQ) is DCB1. Residues 274-330 (LPFIIINTSRKTVIDCSISSDKFEYLFNFDNTFEIHDDIEVLKRMGMSFGLESGKCS) form a DCB2 region. The interval 404-446 (LPASNSHQSSSAASHFSESRGETPCSFNDEDEEDEEEDPSSPE) is disordered. The segment covering 406 to 419 (ASNSHQSSSAASHF) has biased composition (low complexity). Residues 431 to 446 (NDEDEEDEEEDPSSPE) show a composition bias toward acidic residues.

The protein belongs to the E2F/DP family. Component of the DRTF1/E2F transcription factor complex. Forms heterodimers with E2F family members. The complex can interact with hypophosphorylated retinoblastoma protein RB1 and related proteins (RBL1 and RBL2) that inhibit the E2F transactivation domain. During the cell cycle, RB becomes phosphorylated in mid-to-late G1 phase, detaches from the DRTF1/E2F complex rendering E2F transcriptionally active. Interacts with GMCL. Component of the DREAM complex (also named LINC complex) at least composed of E2F4, E2F5, LIN9, LIN37, LIN52, LIN54, MYBL1, MYBL2, RBL1, RBL2, RBBP4, TFDP1 and TFDP2. The complex exists in quiescent cells where it represses cell cycle-dependent genes. It dissociates in S phase when LIN9, LIN37, LIN52 and LIN54 form a subcomplex that binds to MYBL2. The complex TFDP2:E2F1 interacts with CEBPA; the interaction prevents CEBPA binding to target gene promoters and represses its transcriptional activity. Post-translationally, phosphorylation by E2F1-bound cyclin A-CDK2, in the S phase, inhibits E2F-mediated DNA binding and transactivation. As to expression, expressed in all tissues examined. Highest levels in spleen and heart.

The protein resides in the nucleus. Its function is as follows. Can stimulate E2F-dependent transcription. Binds DNA cooperatively with E2F family members through the E2 recognition site, 5'-TTTC[CG]CGC-3', found in the promoter region of a number of genes whose products are involved in cell cycle regulation or in DNA replication. The TFDP2:E2F complex functions in the control of cell-cycle progression from G1 to S phase. The E2F1:DP complex appears to mediate both cell proliferation and apoptosis. Blocks adipocyte differentiation by repressing CEBPA binding to its target gene promoters. This chain is Transcription factor Dp-2 (Tfdp2), found in Mus musculus (Mouse).